A 240-amino-acid chain; its full sequence is Biosynthetic peptidoglycan transglycosylase (240 aa).

Residues 9-31 form a helical membrane-spanning segment; it reads FLNVVKWFAIASVLLVLLFRVVP.

This sequence belongs to the glycosyltransferase 51 family.

The protein resides in the cell inner membrane. It carries out the reaction [GlcNAc-(1-&gt;4)-Mur2Ac(oyl-L-Ala-gamma-D-Glu-L-Lys-D-Ala-D-Ala)](n)-di-trans,octa-cis-undecaprenyl diphosphate + beta-D-GlcNAc-(1-&gt;4)-Mur2Ac(oyl-L-Ala-gamma-D-Glu-L-Lys-D-Ala-D-Ala)-di-trans,octa-cis-undecaprenyl diphosphate = [GlcNAc-(1-&gt;4)-Mur2Ac(oyl-L-Ala-gamma-D-Glu-L-Lys-D-Ala-D-Ala)](n+1)-di-trans,octa-cis-undecaprenyl diphosphate + di-trans,octa-cis-undecaprenyl diphosphate + H(+). It functions in the pathway cell wall biogenesis; peptidoglycan biosynthesis. Peptidoglycan polymerase that catalyzes glycan chain elongation from lipid-linked precursors. The sequence is that of Biosynthetic peptidoglycan transglycosylase from Pseudomonas fluorescens (strain SBW25).